A 900-amino-acid polypeptide reads, in one-letter code: Phosphoenolpyruvate carboxylase (900 aa).

Residues H140 and K568 contribute to the active site.

This sequence belongs to the PEPCase type 1 family. Mg(2+) serves as cofactor.

It catalyses the reaction oxaloacetate + phosphate = phosphoenolpyruvate + hydrogencarbonate. Its function is as follows. Forms oxaloacetate, a four-carbon dicarboxylic acid source for the tricarboxylic acid cycle. This chain is Phosphoenolpyruvate carboxylase, found in Neisseria gonorrhoeae (strain ATCC 700825 / FA 1090).